The sequence spans 716 residues: Epidermal growth factor receptor kinase substrate 8-like protein 2 (716 aa).

2 disordered regions span residues 1–25 (MSQS…DGVA) and 182–243 (PQTL…SQEE). The PID domain maps to 46-202 (MHETSQYHVQ…RQRQSILPPP (157 aa)). The segment covering 199 to 208 (LPPPQGPAPI) has biased composition (pro residues). Residues 234 to 243 (GFRRRESQEE) are compositionally biased toward basic and acidic residues. A Phosphoserine modification is found at Ser-240. Position 304 is a phosphothreonine (Thr-304). The tract at residues 449–488 (VSPVSRQSIRNSQKHSPTSEPTPPGDALPPVSSPHTHRGY) is disordered. Phosphoserine is present on Ser-450. The span at 452–467 (VSRQSIRNSQKHSPTS) shows a compositional bias: polar residues. Thr-470 carries the phosphothreonine modification. Residues 493–552 (AMAKYVKILYDFTARNANELSVLKDEVLEVLEDGRQWWKLRSRSGQAGYVPCNILGEARP) enclose the SH3 domain. Position 571 is a phosphoserine (Ser-571).

Belongs to the EPS8 family. In terms of assembly, interacts with ABI1. Part of a complex that contains SOS1, ABI1 and EPS8L2. Associates with F-actin.

It is found in the cytoplasm. It localises to the cell projection. The protein resides in the stereocilium. Stimulates guanine exchange activity of SOS1. May play a role in membrane ruffling and remodeling of the actin cytoskeleton. In the cochlea, is required for stereocilia maintenance in adult hair cells. The protein is Epidermal growth factor receptor kinase substrate 8-like protein 2 (EPS8L2) of Pongo abelii (Sumatran orangutan).